Reading from the N-terminus, the 269-residue chain is Small ribosomal subunit protein uS2 (269 aa).

A disordered region spans residues 235–269; that stretch reads FDAKNPLKPQNYNTLNKRPYQDSPRKPSYQNQNQR.

The protein belongs to the universal ribosomal protein uS2 family.

This chain is Small ribosomal subunit protein uS2, found in Aster yellows witches'-broom phytoplasma (strain AYWB).